Reading from the N-terminus, the 182-residue chain is LPS-assembly lipoprotein LptE (182 aa).

Residues 1–19 (MRHRILTLLLGLAVLVTAG) form the signal peptide. Cys20 is lipidated: N-palmitoyl cysteine. Cys20 is lipidated: S-diacylglycerol cysteine.

It belongs to the LptE lipoprotein family. In terms of assembly, component of the lipopolysaccharide transport and assembly complex. Interacts with LptD.

The protein resides in the cell outer membrane. In terms of biological role, together with LptD, is involved in the assembly of lipopolysaccharide (LPS) at the surface of the outer membrane. Required for the proper assembly of LptD. Binds LPS and may serve as the LPS recognition site at the outer membrane. The sequence is that of LPS-assembly lipoprotein LptE from Photorhabdus laumondii subsp. laumondii (strain DSM 15139 / CIP 105565 / TT01) (Photorhabdus luminescens subsp. laumondii).